Consider the following 151-residue polypeptide: Nucleoside diphosphate kinase (151 aa).

Residues Lys-10, Phe-58, Arg-86, Thr-92, Arg-103, and Asn-113 each coordinate ATP. His-116 (pros-phosphohistidine intermediate) is an active-site residue.

The protein belongs to the NDK family. Homotetramer. It depends on Mg(2+) as a cofactor.

It is found in the cytoplasm. The catalysed reaction is dZDP + ATP = dZTP + ADP. It carries out the reaction a 2'-deoxyribonucleoside 5'-diphosphate + ATP = a 2'-deoxyribonucleoside 5'-triphosphate + ADP. The enzyme catalyses a ribonucleoside 5'-diphosphate + ATP = a ribonucleoside 5'-triphosphate + ADP. The protein operates within purine metabolism. Major role in the synthesis of nucleoside triphosphates other than ATP. The ATP gamma phosphate is transferred to the NDP beta phosphate via a ping-pong mechanism, using a phosphorylated active-site intermediate. Its function is as follows. (Microbial infection) Catalyzes the phosphorylation of dZDP to dZTP, when the bacterium is infected by a phage that produces the substrate for the synthesis of dZTP (2- amino-2'-deoxyadenosine 5'-triphosphate), which is then used by the phage as a DNA polymerase substrate. The protein is Nucleoside diphosphate kinase of Synechococcus sp. (strain CC9902).